A 328-amino-acid polypeptide reads, in one-letter code: GTPase Obg 2 (328 aa).

In terms of domain architecture, Obg spans 1–139 (MSFRREKFIE…HCVLLKLKIV (139 aa)). The 170-residue stretch at 140 to 309 (SDVGIIGMPN…LHAQVKKAVV (170 aa)) folds into the OBG-type G domain. GTP contacts are provided by residues 146–153 (GMPNAGKS), 171–175 (FTTLE), 192–195 (DIPG), 259–262 (NKCD), and 290–292 (GDE). The Mg(2+) site is built by Ser-153 and Thr-173.

It belongs to the TRAFAC class OBG-HflX-like GTPase superfamily. OBG GTPase family. Monomer. The cofactor is Mg(2+).

It localises to the cytoplasm. In terms of biological role, an essential GTPase which binds GTP, GDP and possibly (p)ppGpp with moderate affinity, with high nucleotide exchange rates and a fairly low GTP hydrolysis rate. Plays a role in control of the cell cycle, stress response, ribosome biogenesis and in those bacteria that undergo differentiation, in morphogenesis control. This Anaplasma marginale (strain Florida) protein is GTPase Obg 2.